The chain runs to 118 residues: Phosphoribosyl-AMP cyclohydrolase (118 aa).

Mg(2+) is bound at residue D87. C88 serves as a coordination point for Zn(2+). Residues D89 and D91 each contribute to the Mg(2+) site. Zn(2+) is bound by residues C104 and C111.

This sequence belongs to the PRA-CH family. In terms of assembly, homodimer. The cofactor is Mg(2+). Requires Zn(2+) as cofactor.

Its subcellular location is the cytoplasm. The enzyme catalyses 1-(5-phospho-beta-D-ribosyl)-5'-AMP + H2O = 1-(5-phospho-beta-D-ribosyl)-5-[(5-phospho-beta-D-ribosylamino)methylideneamino]imidazole-4-carboxamide. Its pathway is amino-acid biosynthesis; L-histidine biosynthesis; L-histidine from 5-phospho-alpha-D-ribose 1-diphosphate: step 3/9. Its function is as follows. Catalyzes the hydrolysis of the adenine ring of phosphoribosyl-AMP. The chain is Phosphoribosyl-AMP cyclohydrolase from Corynebacterium glutamicum (strain R).